Consider the following 373-residue polypeptide: Autophagy-related protein 18 (373 aa).

Positions 142 to 163 (YPDSRDHEPRTEGESSSPNVSN) are disordered. Residues 144–154 (DSRDHEPRTEG) show a composition bias toward basic and acidic residues. WD repeat units lie at residues 144–183 (DSRD…QITK), 186–226 (AHKD…RLYQ), and 231–270 (SLPA…SNLE). The short motif at 227–231 (FRRGS) is the L/FRRG motif element.

The protein belongs to the WD repeat PROPPIN family. In terms of assembly, component of the PI(3,5)P2 regulatory complex. Interacts with atg5.

It is found in the preautophagosomal structure membrane. It localises to the vacuole membrane. The protein resides in the endosome membrane. The PI(3,5)P2 regulatory complex regulates both the synthesis and turnover of phosphatidylinositol 3,5-bisphosphate (PtdIns(3,5)P2). Necessary for proper vacuole morphology. Plays an important role in osmotically-induced vacuole fragmentation. Required for cytoplasm to vacuole transport (Cvt) vesicle formation, pexophagy and starvation-induced autophagy. Involved in correct atg9 trafficking to the preautophagosomal structure. Might also be involved in premeiotic DNA replication. Required for the recruitment of the atg5-atg12/atg16 complex to the preautophagosomal structure. This is Autophagy-related protein 18 (atg18) from Schizosaccharomyces pombe (strain 972 / ATCC 24843) (Fission yeast).